The following is a 332-amino-acid chain: Ethylene-responsive transcription factor ERF119 (332 aa).

A disordered region spans residues 1-33; it reads MAERKKRSSIQTNKPNKKPMKKKPFQLNHLPGL. Residues 15–24 are compositionally biased toward basic residues; the sequence is PNKKPMKKKP. Positions 130 to 187 form a DNA-binding region, AP2/ERF; it reads KPVGVRQRKWGKWAAEIRHPITKVRTWLGTYETLEQAADAYATKKLEFDALAAATSAA.

Belongs to the AP2/ERF transcription factor family. ERF subfamily.

The protein resides in the nucleus. Probably acts as a transcriptional activator. Binds to the GCC-box pathogenesis-related promoter element. May be involved in the regulation of gene expression by stress factors and by components of stress signal transduction pathways. The chain is Ethylene-responsive transcription factor ERF119 (ERF119) from Arabidopsis thaliana (Mouse-ear cress).